The chain runs to 462 residues: MSLPEAYQLEIQALNKQVLQTCPSDILQFCADFFNSRLATERAASISLFRDRGTPSPRFPPSPTNPHFGMMSSQFSSPFGANANPFGGSSSNPNPFGGSASPMSSSVMHRVVEEDESDNHLAPGGSLFSGAFGGDASTEAPPTLRAPPTTDSYPAQYNFSRRTSVSAESLKPSADGFDNWTPPYTDKTPEQVERLKYAIEGNFLFSHLDDEQSAQILGALVEKPIPARGIKVISQGDAGDYFYVVERGSFDVYVNDCGFIEPGPDGLGNKVGTIQAGGSFGELALMYNAPRAATIISAEGSCTLWALDRVTFRRILMESTFARRRMYENFLEEVPILSSLTPYERSKISDALETQKFAPGDVIIHEGDPGHSFYLLESGEAAAFKGEEQVLSYKKGDFFGELALLNDAPRAASVIATSDVKVATLGKNAFQRLLGPVEGLLRRTRYLGVKTGVEEMDPLHTQ.

The interval 54–203 (TPSPRFPPSP…RLKYAIEGNF (150 aa)) is dimerization and phosphorylation. The disordered stretch occupies residues 79–157 (FGANANPFGG…PTTDSYPAQY (79 aa)). Low complexity predominate over residues 80 to 102 (GANANPFGGSSSNPNPFGGSASP). The residue at position 164 (Ser164) is a Phosphoserine. 3',5'-cyclic AMP contacts are provided by residues 204–333 (LFSH…FLEE), Glu282, Arg291, 336–453 (ILSS…KTGV), Glu401, and Arg410.

It belongs to the cAMP-dependent kinase regulatory chain family. In terms of assembly, tetramer, composed of 2 regulatory (R) and 2 catalytic (C) subunits. In the presence of cAMP it dissociates into 2 active monomeric C subunits and an R dimer.

The chain is cAMP-dependent protein kinase regulatory subunit (pkar1) from Hypocrea atroviridis (Trichoderma atroviride).